Reading from the N-terminus, the 385-residue chain is Selenoprotein P (385 aa).

The signal sequence occupies residues 1–19; it reads MWRSLGLALALCLLPYGGA. A non-standard amino acid (selenocysteine) is located at residue Sec59. Positions 59–62 form a cross-link, cysteinyl-selenocysteine (Sec-Cys); in isoform Se-P1; it reads UYLC. N-linked (GlcNAc...) asparagine glycans are attached at residues Asn83, Asn174, and Asn188. Intrachain disulfides connect Cys168/Cys186 and Cys172/Cys175. Residues 196–262 form a disordered region; that stretch reads KTTEPSEEHN…KGQHRQGHLE (67 aa). Basic residues predominate over residues 243 to 258; sequence LHHHHHHHKHKGQHRQ. A non-standard amino acid (selenocysteine) is located at residue Sec264. Ser269 is subject to Phosphoserine. Non-standard amino acids (selenocysteine) are located at Sec282, Sec323, Sec335, and Sec357. The tract at residues 357–385 is disordered; it reads UHSQHVSPTEASPNUSUNNKTKKUKUNLN. Positions 360-369 are enriched in polar residues; the sequence is QHVSPTEASP. O-linked (Hex...) threonine; partial glycosylation is present at Thr365. Non-standard amino acids (selenocysteine) are located at Sec371, Sec373, Sec380, and Sec382. A compositionally biased stretch (basic residues) spans 376 to 385; the sequence is KTKKUKUNLN.

It belongs to the selenoprotein P family. Isoform Se-P1 contains several disulfide bridges and a selenide-sulfide bond between Sec-59 and Cys-62. These bonds are speculated to serve as redox-active pairs. Post-translationally, phosphorylation sites are present in the extracellular medium. Widely expressed, mainly by the liver. Secreted in plasma.

Its subcellular location is the secreted. Functionally, might be responsible for some of the extracellular antioxidant defense properties of selenium or might be involved in the transport of selenium. May supply selenium to tissues such as brain and testis. In Rattus norvegicus (Rat), this protein is Selenoprotein P.